The primary structure comprises 432 residues: Probable protein phosphatase 2C 33 (432 aa).

Residues G27–I298 form the PPM-type phosphatase domain. Positions 74, 75, 250, and 289 each coordinate Mn(2+).

Belongs to the PP2C family. Requires Mg(2+) as cofactor. Mn(2+) serves as cofactor.

The enzyme catalyses O-phospho-L-seryl-[protein] + H2O = L-seryl-[protein] + phosphate. It carries out the reaction O-phospho-L-threonyl-[protein] + H2O = L-threonyl-[protein] + phosphate. The polypeptide is Probable protein phosphatase 2C 33 (Oryza sativa subsp. japonica (Rice)).